Here is a 427-residue protein sequence, read N- to C-terminus: MTAATSVQPSPAPRQPGLRATFNPRKEEKVFLARGAHAFTLPGRRASVNVEVDVEAESDEAALDAKETTITVSYAEKGQESSWSAAKWIKLDRLAKTSQHGVVNEDRATYQQAWSLELLDEAVEPARAIWSALYAFWIRHKRSDRLAVLLKGTQATKVRSYVFEAGLGFKSPCETDLILLDRNAFWQGAGAPAGLHWLQTPVPTRGLFPYVLDFTQSTSPPVLATHPLRPPKPAPGSVVYSRYVFSCSQHLELVHIDVSNPQHFDAYTRWQNSDRVNHGWREKGSDEKHRKYITEKNDDPHAMGVLVLWDGVPAGYGEMVWSKEDGMAAFVGGLGNYDQGTHLLIGEEQFRGKHRFTACMVSLKHACFLRDPRTEVVVGEPRYDLDIIPLLATFLPQEIRKEVELPHKRAVFFVLRRDRFLEEGILE.

Residues 1–24 (MTAATSVQPSPAPRQPGLRATFNP) are disordered. His342 provides a ligand contact to substrate. The active-site Proton acceptor is Glu380.

This sequence belongs to the lysine N-acyltransferase mbtK family.

Its pathway is siderophore biosynthesis. Its function is as follows. Acyltransferase; part of the gene cluster that mediates the biosynthesis of siderophore ferrichrome A which is contributing to organismal virulence. The first step of ferrichrome A biosynthesis is performed by the HMG-CoA synthase hcs1 which catalyzes the generation of HMG-CoA and CoA using acetoacetyl-CoA and acetyl-CoA as substrates. The enoyl-CoA isomerase/hydratase fer4 then catalyzes the conversion of hcs1-produced HMG-CoA to methylglutaconyl-CoA. The acyltransferase fer5 then fuses the fer4-generated methylglutaconyl-CoA with sid1-generated hydroxyornithine to yield methylglutaconyl hydroxyornithine. Methylglutaconyl hydroxyornithine is then available for use by the NRPS fer3 to generate ferrichrome A. The polypeptide is Acyltransferase fer5 (Mycosarcoma maydis (Corn smut fungus)).